We begin with the raw amino-acid sequence, 594 residues long: MGGIIKLSFLFCSLISLVNSENTGKLPTAISDHSVPKATATTDPSVFVLSNDFEITDVPTTREYTFNLTEALASPDGYERLVYAVNNMLPGPVIEANTGDTVIVHVNNYLHEGQGIHWHGLRQNGTALMDGVPGITQCSIPPGGSFTYQFTVSHQSGTFWWHSHYSNSMADGIWGPLIVHSPNEPLQRGRDYDEDRIVAVTDWMHDESETIVEALISSEGYRGRPFPPQGDAILINGRGQTNCTATGSPSCTYPPPPEIHVPVNCRVRLRFISAASHPMYRISIDNHSMEIVETDGTAVYGPTIHEISISSGERYSVIINTTEGKEGDAFWLRTSVALDCMAQGVTQVGLAVVRYTGNGSITTAEPRTEAWTDLARPDTPCVGLDEMYHLSPRELVNASQTALESRVLDSKLGKFVDVYGNSFEGYGFNNVTYQNQINDPLLYVVQRGGTCNSSLIANATFADIGPVNIIINNLDSHIGHPYHMHGTEFQLMGRGTGALTLDDLPNTNLTLDNPTRKDTIWMQGGSWALLRIISDNPGVWALHCHIGWHLAKGKMAVVVVQPEAIKKIQWPESWMDLCANTDPNAFGPARRSVS.

An N-terminal signal peptide occupies residues 1 to 20 (MGGIIKLSFLFCSLISLVNS). N-linked (GlcNAc...) asparagine glycosylation occurs at Asn-67. 2 Plastocyanin-like domains span residues 70–183 (EALA…HSPN) and 195–357 (DRIV…RYTG). Positions 117 and 119 each coordinate Cu cation. The N-linked (GlcNAc...) asparagine glycan is linked to Asn-124. A disulfide bridge connects residues Cys-138 and Cys-578. Cu cation-binding residues include His-162 and His-164. 8 N-linked (GlcNAc...) asparagine glycosylation sites follow: Asn-242, Asn-286, Asn-320, Asn-358, Asn-397, Asn-430, Asn-452, and Asn-458. The region spanning 466-563 (PVNIIINNLD…KMAVVVVQPE (98 aa)) is the Plastocyanin-like 3 domain. Residues His-480, His-483, and His-485 each contribute to the Cu cation site. The N-linked (GlcNAc...) asparagine glycan is linked to Asn-508. Cu cation is bound by residues His-543, Cys-544, His-545, and His-549.

Belongs to the multicopper oxidase family. Cu cation is required as a cofactor.

The protein resides in the secreted. Its subcellular location is the cell wall. It catalyses the reaction 4 hydroquinone + O2 = 4 benzosemiquinone + 2 H2O. Laccase that catalyzes the oxidation of certain aromatic compounds, including L-dopa, to quinones, which then polymerize to melanin. Able to oxidize a wide variety of aromatic diphenol and diamino groups in the ortho, meta, and para positions but not monophenolic groups such as in phenol, tyramine, or tyrosine. Plays an important role in virulence. Plays a role in dissemination to extrapulmonary sites but is not involved in pulmonary growth or in elicitation of cellular immune responses in the lung. The chain is Laccase-2 (LAC2) from Cryptococcus neoformans var. grubii serotype A (strain H99 / ATCC 208821 / CBS 10515 / FGSC 9487) (Filobasidiella neoformans var. grubii).